The chain runs to 421 residues: Probable dual-specificity RNA methyltransferase RlmN (421 aa).

The segment at methionine 1–valine 23 is disordered. The active-site Proton acceptor is the glutamate 127. The Radical SAM core domain maps to tyrosine 133–arginine 372. The cysteines at positions 140 and 378 are disulfide-linked. 3 residues coordinate [4Fe-4S] cluster: cysteine 147, cysteine 151, and cysteine 154. S-adenosyl-L-methionine-binding positions include glycine 202–glutamate 203, serine 236, serine 259–histidine 261, and asparagine 335. The active-site S-methylcysteine intermediate is the cysteine 378. Positions alanine 383–arginine 421 are disordered. A compositionally biased stretch (basic and acidic residues) spans glycine 387–glutamate 396.

The protein belongs to the radical SAM superfamily. RlmN family. [4Fe-4S] cluster is required as a cofactor.

Its subcellular location is the cytoplasm. It catalyses the reaction adenosine(2503) in 23S rRNA + 2 reduced [2Fe-2S]-[ferredoxin] + 2 S-adenosyl-L-methionine = 2-methyladenosine(2503) in 23S rRNA + 5'-deoxyadenosine + L-methionine + 2 oxidized [2Fe-2S]-[ferredoxin] + S-adenosyl-L-homocysteine. The enzyme catalyses adenosine(37) in tRNA + 2 reduced [2Fe-2S]-[ferredoxin] + 2 S-adenosyl-L-methionine = 2-methyladenosine(37) in tRNA + 5'-deoxyadenosine + L-methionine + 2 oxidized [2Fe-2S]-[ferredoxin] + S-adenosyl-L-homocysteine. Its function is as follows. Specifically methylates position 2 of adenine 2503 in 23S rRNA and position 2 of adenine 37 in tRNAs. The polypeptide is Probable dual-specificity RNA methyltransferase RlmN (Frankia casuarinae (strain DSM 45818 / CECT 9043 / HFP020203 / CcI3)).